The following is a 685-amino-acid chain: N(6)-adenosine-methyltransferase MT-A70-like (685 aa).

S-adenosyl-L-methionine-binding positions include 464-465 and Asp-482; that span reads DI. The tract at residues 552–565 is positively charged region required for RNA-binding; the sequence is RIIRTGRTGHWLNH. S-adenosyl-L-methionine-binding positions include Lys-599, 622–625, and 635–636; these read RMHN and NQ. The interval 657–685 is disordered; it reads EIDVQPPSPPRASAMETDNEPMAIDSITA. The residue at position 664 (Ser-664) is a Phosphoserine.

This sequence belongs to the MT-A70-like family. In terms of assembly, interacts with FIP37. Interacts with MTB. Associates with MTB, FIP37, VIR and HAKAI to form the m6A writer complex which is essential for adenosine methylation at specific mRNA sequences.

It localises to the nucleus. It carries out the reaction an adenosine in mRNA + S-adenosyl-L-methionine = an N(6)-methyladenosine in mRNA + S-adenosyl-L-homocysteine + H(+). Catalytic subunit of the N6-methyltransferase complex, a multiprotein complex that mediates N6-methyladenosine (m6A) methylation at the 5'-[AG]GAC-3' consensus sites of some mRNAs. Associates with MTB, FIP37, VIR and HAKAI to form the m6A writer complex which is essential for adenosine methylation at specific mRNA sequences. N6-methyladenosine (m6A) plays a role in mRNA stability, processing, translation efficiency and editing. This Arabidopsis thaliana (Mouse-ear cress) protein is N(6)-adenosine-methyltransferase MT-A70-like.